The sequence spans 310 residues: Coproporphyrin III ferrochelatase (310 aa).

Residue Y13 coordinates Fe-coproporphyrin III. Y13 contacts N-methylmesoporphyrin. E20 lines the Mg(2+) pocket. R30 is a binding site for Fe-coproporphyrin III. 31–33 (RGR) provides a ligand contact to N-methylmesoporphyrin. R46 lines the Mg(2+) pocket. Fe-coproporphyrin III contacts are provided by residues 46-47 (RY), S54, and Y125. N-methylmesoporphyrin is bound by residues H183 and K188. Residue H183 coordinates Fe(2+). Position 264 (E264) interacts with Fe(2+). D268 and E272 together coordinate Mg(2+).

The protein belongs to the ferrochelatase family. As to quaternary structure, monomer. Interacts with frataxin/Fra.

It localises to the cytoplasm. It catalyses the reaction Fe-coproporphyrin III + 2 H(+) = coproporphyrin III + Fe(2+). Its pathway is porphyrin-containing compound metabolism; protoheme biosynthesis. Its activity is regulated as follows. Stimulated by Mg(2+). Inhibited by Cd(2+). Inhibited by N-methylmesoporphyrin (N-MeMP) and 2,4-disulfonic acid deuteroporphyrin IX (dSDP). Involved in coproporphyrin-dependent heme b biosynthesis. Catalyzes the insertion of ferrous iron into coproporphyrin III to form Fe-coproporphyrin III. It can also insert iron into protoporphyrin IX. Has weaker activity with 2,4 disulfonate, deuteroporphyrin and 2,4 hydroxyethyl. In vitro, can also use Zn(2+) or Cu(2+). This chain is Coproporphyrin III ferrochelatase, found in Bacillus subtilis (strain 168).